Reading from the N-terminus, the 341-residue chain is D-erythrose-4-phosphate dehydrogenase (341 aa).

14–15 (RI) is an NAD(+) binding site. Substrate is bound by residues 156–158 (SCT), Arg202, 215–216 (TR), and Arg238. Cys157 serves as the catalytic Nucleophile. Asn320 contributes to the NAD(+) binding site.

This sequence belongs to the glyceraldehyde-3-phosphate dehydrogenase family. Epd subfamily. In terms of assembly, homotetramer.

It localises to the cytoplasm. The enzyme catalyses D-erythrose 4-phosphate + NAD(+) + H2O = 4-phospho-D-erythronate + NADH + 2 H(+). The protein operates within cofactor biosynthesis; pyridoxine 5'-phosphate biosynthesis; pyridoxine 5'-phosphate from D-erythrose 4-phosphate: step 1/5. In terms of biological role, catalyzes the NAD-dependent conversion of D-erythrose 4-phosphate to 4-phosphoerythronate. The chain is D-erythrose-4-phosphate dehydrogenase from Idiomarina loihiensis (strain ATCC BAA-735 / DSM 15497 / L2-TR).